The chain runs to 408 residues: Tryptophan synthase beta chain (408 aa).

Lys-90 bears the N6-(pyridoxal phosphate)lysine mark.

It belongs to the TrpB family. As to quaternary structure, tetramer of two alpha and two beta chains. Requires pyridoxal 5'-phosphate as cofactor.

It catalyses the reaction (1S,2R)-1-C-(indol-3-yl)glycerol 3-phosphate + L-serine = D-glyceraldehyde 3-phosphate + L-tryptophan + H2O. It functions in the pathway amino-acid biosynthesis; L-tryptophan biosynthesis; L-tryptophan from chorismate: step 5/5. In terms of biological role, the beta subunit is responsible for the synthesis of L-tryptophan from indole and L-serine. The chain is Tryptophan synthase beta chain from Bacillus licheniformis (strain ATCC 14580 / DSM 13 / JCM 2505 / CCUG 7422 / NBRC 12200 / NCIMB 9375 / NCTC 10341 / NRRL NRS-1264 / Gibson 46).